Consider the following 249-residue polypeptide: GTP cyclohydrolase III (249 aa).

Belongs to the archaeal-type GTP cyclohydrolase family.

The enzyme catalyses GTP + 3 H2O = 2-amino-5-formylamino-6-(5-phospho-D-ribosylamino)pyrimidin-4(3H)-one + 2 phosphate + 2 H(+). Catalyzes the formation of 2-amino-5-formylamino-6-ribofuranosylamino-4(3H)-pyrimidinone ribonucleotide monophosphate and inorganic phosphate from GTP. Also has an independent pyrophosphate phosphohydrolase activity. This chain is GTP cyclohydrolase III, found in Methanothermobacter thermautotrophicus (strain ATCC 29096 / DSM 1053 / JCM 10044 / NBRC 100330 / Delta H) (Methanobacterium thermoautotrophicum).